A 415-amino-acid polypeptide reads, in one-letter code: MPTWTEHIFYKKTGRIPSPGDVVEVAPDLVGFHDLTGYHVLEVLEHMGKVEVFDNEKVVVAFDHLSPPPNQRAAEIMVYIRRHVKSLGLPHFFDVGGGILHQIILERYAMPGQVIFTADSHGNTAGAVGAFAHGMGATDIAAALKLGKTWLVVPAPFKVEVRGEFPPGVMGKDVALHLLGQFGAEGFNGYSVEVFVERPKVFPMDDRATVGNMSTEMGADALMFIPDAVTAEYLKTARGVDYTPPSLEPGNYADKYTVELGRLEPLVAAPHSVDNVKTVREVEGVEVDQVFIGSCTNGRLRDIATAARILKGRRVKTRCIAIPASYEVFKTAMKLGYIDVLTEAGCVVTYGTCGPCLGGHFGVAGPGEVHLTTSNRNFKGRVGHPEAKIYLANPAVAAATAAEGRIADPRPYLKH.

Positions 295, 353, and 356 each coordinate [4Fe-4S] cluster.

Belongs to the aconitase/IPM isomerase family. LeuC type 2 subfamily. Heterodimer of LeuC and LeuD. The cofactor is [4Fe-4S] cluster.

It catalyses the reaction (2R,3S)-3-isopropylmalate = (2S)-2-isopropylmalate. The protein operates within amino-acid biosynthesis; L-leucine biosynthesis; L-leucine from 3-methyl-2-oxobutanoate: step 2/4. Catalyzes the isomerization between 2-isopropylmalate and 3-isopropylmalate, via the formation of 2-isopropylmaleate. The sequence is that of 3-isopropylmalate dehydratase large subunit from Pyrobaculum arsenaticum (strain DSM 13514 / JCM 11321 / PZ6).